The primary structure comprises 143 residues: Transcriptional regulator MraZ (143 aa).

SpoVT-AbrB domains are found at residues 5 to 47 and 76 to 119; these read EYQH…PQDE and AAEL…STEK.

Belongs to the MraZ family. Forms oligomers.

It is found in the cytoplasm. The protein localises to the nucleoid. In Syntrophomonas wolfei subsp. wolfei (strain DSM 2245B / Goettingen), this protein is Transcriptional regulator MraZ.